Reading from the N-terminus, the 103-residue chain is uncharacterized protein (103 aa).

The N-terminal stretch at 1–13 (MLLSSIVSFVADA) is a signal peptide. N-linked (GlcNAc...) asparagine glycosylation occurs at N67. Positions 73–103 (LSSDSNRNIIDNSNNNQHPSSSSTSTSWKKF) are disordered.

It is found in the secreted. This is an uncharacterized protein from Dictyostelium discoideum (Social amoeba).